Reading from the N-terminus, the 273-residue chain is uncharacterized protein (273 aa).

This sequence belongs to the ycf23 family.

The protein resides in the plastid. Its subcellular location is the chloroplast. This is an uncharacterized protein from Pyropia yezoensis (Susabi-nori).